Consider the following 22-residue polypeptide: Heliocin (22 aa).

The residue at position 1 (glutamine 1) is a Pyrrolidone carboxylic acid. Residues 1 to 22 (QRFIHPTYRPPPQPRRPVIMRA) form a disordered region. An O-linked (GalNAc...) threonine glycan is attached at threonine 7.

As to quaternary structure, monomer. In terms of tissue distribution, hemolymph.

The protein resides in the secreted. Its function is as follows. Has antibacterial activity, preferentially against Gram-negative bacteria. The chain is Heliocin from Heliothis virescens (Tobacco budworm moth).